A 57-amino-acid polypeptide reads, in one-letter code: Major exported protein (57 aa).

The protein belongs to the hcp1 family. Homodimer.

It localises to the secreted. The polypeptide is Major exported protein (Pseudomonas syringae pv. ribicola).